Here is a 137-residue protein sequence, read N- to C-terminus: Putative pre-16S rRNA nuclease (137 aa).

The protein belongs to the YqgF nuclease family.

The protein localises to the cytoplasm. In terms of biological role, could be a nuclease involved in processing of the 5'-end of pre-16S rRNA. The chain is Putative pre-16S rRNA nuclease from Bacillus cereus (strain B4264).